The chain runs to 360 residues: Variable large protein 14 (360 aa).

A signal peptide spans 1-18; that stretch reads MRKRISAIIMTLFMVLAS. The N-palmitoyl cysteine moiety is linked to residue C19. Residue C19 is the site of S-diacylglycerol cysteine attachment.

The protein belongs to the variable large protein (Vlp) family. Beta subfamily.

It localises to the cell outer membrane. Functionally, the Vlp and Vsp proteins are antigenically distinct proteins, only one vlp or vsp gene is transcriptionally active at any one time. Switching between these genes is a mechanism of host immune response evasion. The chain is Variable large protein 14 from Borrelia hermsii.